The sequence spans 147 residues: D-aminoacyl-tRNA deacylase (147 aa).

The Gly-cisPro motif, important for rejection of L-amino acids motif lies at 137-138 (GP).

The protein belongs to the DTD family. As to quaternary structure, homodimer.

It is found in the cytoplasm. The enzyme catalyses glycyl-tRNA(Ala) + H2O = tRNA(Ala) + glycine + H(+). It catalyses the reaction a D-aminoacyl-tRNA + H2O = a tRNA + a D-alpha-amino acid + H(+). Functionally, an aminoacyl-tRNA editing enzyme that deacylates mischarged D-aminoacyl-tRNAs. Also deacylates mischarged glycyl-tRNA(Ala), protecting cells against glycine mischarging by AlaRS. Acts via tRNA-based rather than protein-based catalysis; rejects L-amino acids rather than detecting D-amino acids in the active site. By recycling D-aminoacyl-tRNA to D-amino acids and free tRNA molecules, this enzyme counteracts the toxicity associated with the formation of D-aminoacyl-tRNA entities in vivo and helps enforce protein L-homochirality. This Bacillus velezensis (strain DSM 23117 / BGSC 10A6 / LMG 26770 / FZB42) (Bacillus amyloliquefaciens subsp. plantarum) protein is D-aminoacyl-tRNA deacylase.